A 494-amino-acid polypeptide reads, in one-letter code: DEAD-box ATP-dependent RNA helicase 20 (494 aa).

Residues 1–20 are compositionally biased toward basic and acidic residues; the sequence is MSRFDGRAADPGSYRDRRSE. The disordered stretch occupies residues 1 to 39; the sequence is MSRFDGRAADPGSYRDRRSEGAFGGGTRAFAPTSKADSA. Residues 29–39 are compositionally biased toward low complexity; that stretch reads AFAPTSKADSA. Residues 91–119 carry the Q motif motif; that stretch reads REFRDVGFPEYVLQEITKAGFVEPTPIQS. Residues 122 to 297 enclose the Helicase ATP-binding domain; the sequence is WPMALRGRDL…RNFLFDPYKV (176 aa). 135-142 contacts ATP; that stretch reads AETGSGKT. The DEAD box signature appears at 245 to 248; the sequence is DEAD. One can recognise a Helicase C-terminal domain in the interval 325–470; that stretch reads KLVNLLEDIM…KVSPELANMG (146 aa). The interval 465–494 is disordered; that stretch reads ELANMGRGAPPPSSGHRDRYRGYGGGRSWS.

It belongs to the DEAD box helicase family. DDX5/DBP2 subfamily.

It is found in the nucleus. It catalyses the reaction ATP + H2O = ADP + phosphate + H(+). In terms of biological role, ATP-dependent RNA helicase involved nonsense-mediated mRNA decay and ribosome biogenesis through rRNA processing. The sequence is that of DEAD-box ATP-dependent RNA helicase 20 from Oryza sativa subsp. japonica (Rice).